A 907-amino-acid chain; its full sequence is Protein translocase subunit SecA (907 aa).

Residues Gln87, 105–109, and Asp512 contribute to the ATP site; that span reads GEGKT. Residues 834-907 are disordered; sequence QEDVERMEEQ…KKYKQCHGKI (74 aa). Composition is skewed to basic and acidic residues over residues 836 to 853 and 873 to 888; these read DVER…EAAR and EEAH…KVGR. The Zn(2+) site is built by Cys892, Cys894, Cys903, and His904. A compositionally biased stretch (basic residues) spans 898–907; sequence KKYKQCHGKI.

The protein belongs to the SecA family. In terms of assembly, monomer and homodimer. Part of the essential Sec protein translocation apparatus which comprises SecA, SecYEG and auxiliary proteins SecDF-YajC and YidC. It depends on Zn(2+) as a cofactor.

The protein localises to the cell inner membrane. Its subcellular location is the cytoplasm. It carries out the reaction ATP + H2O + cellular proteinSide 1 = ADP + phosphate + cellular proteinSide 2.. Part of the Sec protein translocase complex. Interacts with the SecYEG preprotein conducting channel. Has a central role in coupling the hydrolysis of ATP to the transfer of proteins into and across the cell membrane, serving both as a receptor for the preprotein-SecB complex and as an ATP-driven molecular motor driving the stepwise translocation of polypeptide chains across the membrane. The sequence is that of Protein translocase subunit SecA from Aliivibrio fischeri (strain MJ11) (Vibrio fischeri).